A 182-amino-acid chain; its full sequence is Small ribosomal subunit protein uS4c (182 aa).

The S4 RNA-binding domain occupies 82 to 143; that stretch reads MRLDNILFRL…KQRSKALIQN (62 aa).

Belongs to the universal ribosomal protein uS4 family. Part of the 30S ribosomal subunit. Contacts protein S5. The interaction surface between S4 and S5 is involved in control of translational fidelity.

It is found in the plastid. The protein resides in the chloroplast. In terms of biological role, one of the primary rRNA binding proteins, it binds directly to 16S rRNA where it nucleates assembly of the body of the 30S subunit. Its function is as follows. With S5 and S12 plays an important role in translational accuracy. This chain is Small ribosomal subunit protein uS4c (rps4), found in Libertia formosa (Snowy mermaid).